The chain runs to 420 residues: Probable pectate lyase C (420 aa).

An N-terminal signal peptide occupies residues 1-20; that stretch reads MKLSAPLLVSLAAFSQAVTA. Residues asparagine 49, asparagine 165, and asparagine 202 are each glycosylated (N-linked (GlcNAc...) asparagine). The active site involves arginine 205. The EF-hand domain maps to 262-297; it reads NANFHGYVDNNYYDPDKDGQLDGSELGVSSSNYGGM. 5 residues coordinate Ca(2+): aspartate 275, aspartate 277, aspartate 279, glutamine 281, and glutamate 286. The segment at 357–395 is disordered; it reads ATMGGPGTLNGGTPAKDTDGDGIPDEAEKQLGTDPNTND. Asparagine 394 carries N-linked (GlcNAc...) asparagine glycosylation.

This sequence belongs to the polysaccharide lyase 1 family. The cofactor is Ca(2+).

Its subcellular location is the secreted. The catalysed reaction is Eliminative cleavage of (1-&gt;4)-alpha-D-galacturonan to give oligosaccharides with 4-deoxy-alpha-D-galact-4-enuronosyl groups at their non-reducing ends.. Its function is as follows. Pectinolytic enzyme consist of four classes of enzymes: pectin lyase, polygalacturonase, pectin methylesterase and rhamnogalacturonase. Among pectinolytic enzymes, pectin lyase is the most important in depolymerization of pectin, since it cleaves internal glycosidic bonds of highly methylated pectins. Favors pectate, the anion, over pectin, the methyl ester. This Neosartorya fischeri (strain ATCC 1020 / DSM 3700 / CBS 544.65 / FGSC A1164 / JCM 1740 / NRRL 181 / WB 181) (Aspergillus fischerianus) protein is Probable pectate lyase C (plyC).